A 192-amino-acid polypeptide reads, in one-letter code: Leucine-rich repeat-containing protein 51 (192 aa).

LRR repeat units follow at residues 50-71 (MTQS…NHAV), 80-101 (NLAW…LTTF), and 103-124 (NLSV…NKLA). The 39-residue stretch at 137–175 (NPIEEEKGYRQYVLCTLPHITTFDFSGVTKADRTTAEVW) folds into the LRRCT domain.

The protein localises to the cytoplasm. In Bos taurus (Bovine), this protein is Leucine-rich repeat-containing protein 51.